A 296-amino-acid polypeptide reads, in one-letter code: Probable porphobilinogen deaminase (296 aa).

C241 carries the S-(dipyrrolylmethanemethyl)cysteine modification.

Belongs to the HMBS family. Requires dipyrromethane as cofactor.

It catalyses the reaction 4 porphobilinogen + H2O = hydroxymethylbilane + 4 NH4(+). It functions in the pathway porphyrin-containing compound metabolism; protoporphyrin-IX biosynthesis; coproporphyrinogen-III from 5-aminolevulinate: step 2/4. In terms of biological role, tetrapolymerization of the monopyrrole PBG into the hydroxymethylbilane pre-uroporphyrinogen in several discrete steps. The protein is Probable porphobilinogen deaminase of Pyrobaculum calidifontis (strain DSM 21063 / JCM 11548 / VA1).